Here is a 198-residue protein sequence, read N- to C-terminus: Methyl-coenzyme M reductase I operon protein C (198 aa).

MCR is composed of three subunits: alpha, beta, and gamma. The function of proteins C and D is not known.

This is Methyl-coenzyme M reductase I operon protein C (mcrC) from Methanothermobacter marburgensis (strain ATCC BAA-927 / DSM 2133 / JCM 14651 / NBRC 100331 / OCM 82 / Marburg) (Methanobacterium thermoautotrophicum).